The chain runs to 123 residues: Large ribosomal subunit protein bL20 (123 aa).

This sequence belongs to the bacterial ribosomal protein bL20 family.

In terms of biological role, binds directly to 23S ribosomal RNA and is necessary for the in vitro assembly process of the 50S ribosomal subunit. It is not involved in the protein synthesizing functions of that subunit. This Pseudothermotoga lettingae (strain ATCC BAA-301 / DSM 14385 / NBRC 107922 / TMO) (Thermotoga lettingae) protein is Large ribosomal subunit protein bL20.